The chain runs to 62 residues: Snaclec aspercetin subunit beta (62 aa).

An intrachain disulfide couples cysteine 2 to cysteine 13. The 54-residue stretch at 9-62 folds into the C-type lectin domain; that stretch reads YEGHCYRVFKPPKDWADAERFCSQQAKGGHLVSIERFGREDFVSNLITKNLQRG.

Belongs to the snaclec family. As to quaternary structure, heterodimer; disulfide-linked. As to expression, expressed by the venom gland.

It localises to the secreted. In terms of biological role, snaclec that binds to von Willebrand factor (VWF) and induces its interaction with GPIbalpha (GP1BA) (via the vWF A1 domain), resulting in platelet aggregation. Intramuscular and intravenous injections in mice induce a dose-dependent drop in platelet count (thrombocytopenia). Pretreatment by intravenous injection by this protein in mice potentiates the hemorrhagic lesion in the skin provoked by the metalloproteinase BaP1 intradermally injected. This result is not observed when both BaP1 and this protein are injected simultaneously. This chain is Snaclec aspercetin subunit beta, found in Bothrops asper (Terciopelo).